Consider the following 215-residue polypeptide: Cytochrome b6 (215 aa).

Residues 32–52 traverse the membrane as a helical segment; the sequence is IFYCLGGIVFVSFLIQVATGF. Residue cysteine 35 coordinates heme c. 2 residues coordinate heme b: histidine 86 and histidine 100. Helical transmembrane passes span 90–110, 116–136, and 186–206; these read ASMM…TGGF, LTWV…VTGY, and LHTF…FLMI. Positions 187 and 202 each coordinate heme b.

Belongs to the cytochrome b family. PetB subfamily. In terms of assembly, the 4 large subunits of the cytochrome b6-f complex are cytochrome b6, subunit IV (17 kDa polypeptide, PetD), cytochrome f and the Rieske protein, while the 4 small subunits are PetG, PetL, PetM and PetN. The complex functions as a dimer. Requires heme b as cofactor. Heme c serves as cofactor.

It is found in the plastid. It localises to the chloroplast thylakoid membrane. In terms of biological role, component of the cytochrome b6-f complex, which mediates electron transfer between photosystem II (PSII) and photosystem I (PSI), cyclic electron flow around PSI, and state transitions. In Porphyra purpurea (Red seaweed), this protein is Cytochrome b6.